The sequence spans 120 residues: uncharacterized protein (120 aa).

Residues 80 to 99 (PTRKLQTPLNEPPRTWRKTA) form a disordered region.

This is an uncharacterized protein from Goose circovirus (GoCV).